The chain runs to 1155 residues: MNSNELDLRNKYFYEIFGKKRKSDTSTPTQLFSGSKVQTNINEISITNDEDEDSTEDENKASLKDYTLGHDTGARYRIAPDCSSHQLKASPVLHISTNLNSSPQSFTGDQISPTNKKISINDSTRQDKGNSCTTTSSPSQKRSNVLLPHVRKHSSPSLLSFSKNSGSHMGDPNQLSTPPTPKSAGHTMELHSSFNGKHSSSSTSSLFALESLKTQNRRSSNSSNHSSQYRRHTNQHQRHHSRSKSSPVSLTEISMIKGTPLVYPALLSLIAIKFKQTIKLSTHKKMGLLYRDSFTGKQAIDTLCLIIGSLDRNLGMLIGKSLEAQKLFHDVLYDHGVRDSVLEIYELSSESIFMAHQSQSSTSIANTFSSSSSSVNSLRTKTEIYGVFVPLTHCYSSTCSLEKLCYSISCPNRLQQQANLHLKLGGGLKRNISLALDKEDDERISWTNSVPKSVWESLSKQQIKRQEAIYELFTTEKKFVKSLEIIRDTFMKKLLETNIIPSDVRINFVKHVFAHINEIYSVNREFLKALAQRQSLSPICPGIADIFLQYLPFFDPFLSYIASRPYAKYLIETQRSVNPNFARFDDEVSNSSLRHGIDSFLSQGVSRPGRYSLLVREIIHFSDPVTDKDDLQMLMKVQDLLKDLMKRIDRASGAAQDRYDVKVLKQKILFKNEYVNLGLNNEKRKIKHEGLLSRKDVNKTDASFSGDIQFYLLDNMLLFLKSKAVNKWHQHTVFQRPIPLPLLFICPAEDMPPIKRYVTENPNCSAGVLLPQYQTSNPKNAIVFAYYGTKQQYQVTLYAPQPAGLQTLIEKVKQEQKRLLDETKHITFKQMVGQFFHSYINTNRVNDVLICHAGKILLVATNMGLFVLNYATSINQKPVHLLHKISISQISVLEEYKVMILLIDKKLYGCPLDVIDDAENADFLFRKNSKVLFKYVAMFKDGFCNGKRIIMIAHHFLHAVQLLIVNPLIFDFNSGNFKKNLKAGLVDFSVDSEPLSFSFLENKICIGCKKNIKILNVPEVCDKNGFKMRELLNLHDNKVLANMYKETFKVVSMFPIKNSTFACFPELCFFLNKQGKREETKGCFHWEGEPEQFACSYPYIVAINSNFIEIRHIENGELVRCVLGNKIRMLKSYAKKILYCYEDPQGFEIIELLNF.

N-acetylmethionine is present on Met1. The span at 100–143 shows a compositional bias: polar residues; the sequence is NSSPQSFTGDQISPTNKKISINDSTRQDKGNSCTTTSSPSQKRS. The segment at 100–249 is disordered; it reads NSSPQSFTGD…HSRSKSSPVS (150 aa). Residues Ser154 and Ser155 each carry the phosphoserine modification. A compositionally biased stretch (low complexity) spans 155–167; sequence SPSLLSFSKNSGS. Position 180 is a phosphothreonine (Thr180). Low complexity predominate over residues 190–227; it reads LHSSFNGKHSSSSTSSLFALESLKTQNRRSSNSSNHSS. Residues 228–243 show a composition bias toward basic residues; the sequence is QYRRHTNQHQRHHSRS. Ser433 is modified (phosphoserine). The region spanning 464–651 is the DH domain; sequence KRQEAIYELF…KDLMKRIDRA (188 aa). Residues 842 to 1137 enclose the CNH domain; the sequence is TNRVNDVLIC…RMLKSYAKKI (296 aa).

Its function is as follows. Stimulates the exchange of RHO1 GDP-bound form into GTP-bound form. This Saccharomyces cerevisiae (strain ATCC 204508 / S288c) (Baker's yeast) protein is RHO1 GDP-GTP exchange protein 1 (ROM1).